The primary structure comprises 528 residues: Low affinity inorganic phosphate transporter 4 (528 aa).

At 1 to 18 the chain is on the cytoplasmic side; the sequence is MALEVLEALDSARTQWYH. The chain crosses the membrane as a helical span at residues 19–39; the sequence is VTAIVIAGMGFFTDAYDLFCI. Over 40–68 the chain is Extracellular; it reads TTVSKLLGRLYYFDPSTGKPGKLPNNVNN. Residues 69–89 form a helical membrane-spanning segment; sequence LVTGVALVGTLSGQLFFGYLG. The Cytoplasmic portion of the chain corresponds to 90–96; the sequence is DKLGRKK. The chain crosses the membrane as a helical span at residues 97-117; that stretch reads VYGVTLILMVACAICSGLSFG. Residues 118 to 122 lie on the Extracellular side of the membrane; sequence ASAKS. Residues 123–143 form a helical membrane-spanning segment; the sequence is VMGTLCFFRFWLGFGIGGDYP. Residues 144 to 158 lie on the Cytoplasmic side of the membrane; it reads LSATIMSEYANKRTR. A helical transmembrane segment spans residues 159-179; it reads GAFIAAVFAMQGVGIIFAGLV. Topologically, residues 180-208 are extracellular; the sequence is SMCLSAGFKASYHAPSFHDDPIMSTQPQG. The helical transmembrane segment at 209 to 229 threads the bilayer; sequence DLMWRLVLMIGAVPAAMTYYW. Residues 230 to 292 are Cytoplasmic-facing; that stretch reads RMKMPETGRY…NEFFTRHGRH (63 aa). A helical membrane pass occupies residues 293–313; that stretch reads LIGTMTSWFLLDIAFYSQNLT. At 314-341 the chain is on the extracellular side; sequence QKDIFPAMGLIDKDFEMNAIQEVFETSR. The chain crosses the membrane as a helical span at residues 342-362; it reads AMFVIALFGTFPGYWFTVFFI. The Cytoplasmic segment spans residues 363-371; the sequence is EKLGRYKIQ. Residues 372–392 traverse the membrane as a helical segment; it reads LIGFFMMSVFMFIIGVKYDYL. The Extracellular segment spans residues 393 to 401; that stretch reads RNENSHMFA. Residues 402–422 traverse the membrane as a helical segment; sequence LLYGLTFFFANFGPNSTTFVL. Residues 423–433 lie on the Cytoplasmic side of the membrane; the sequence is PAELFPTRVRS. A helical membrane pass occupies residues 434–454; that stretch reads TCHALSAAAGKAGAMVGAFGI. The Extracellular segment spans residues 455 to 467; the sequence is QNYTQKGEQKQIK. The N-linked (GlcNAc...) asparagine glycan is linked to N456. A helical membrane pass occupies residues 468-488; the sequence is HAMMILAVTNLIGFFCSFLVT. Residues 489–528 lie on the Cytoplasmic side of the membrane; that stretch reads ETKGRSLEEISGEDGRESELTPTPPNNRVPTRQEPRSETM. 2 stretches are compositionally biased toward basic and acidic residues: residues 496 to 507 and 519 to 528; these read EEISGEDGRESE and TRQEPRSETM. Residues 496-528 are disordered; sequence EEISGEDGRESELTPTPPNNRVPTRQEPRSETM.

This sequence belongs to the major facilitator superfamily. Phosphate:H(+) symporter (TC 2.A.1.9) family. As to expression, expressed only in mycorrhizal roots, exclusively in cortical cells containing arbuscules, upon arbuscular mycorrhizal (AM) symbiosis with AM fungi (e.g. Gigaspora margarita and Funnelliformis mosseae). Also observed in root tips of non-mycorrhizal roots, in a phosphate (Pi) depended-manner, highest expression levels being observed in low Pi conditions.

The protein resides in the cell membrane. The catalysed reaction is phosphate(in) + H(+)(in) = phosphate(out) + H(+)(out). Low-affinity transporter for external inorganic phosphate (Pi) probably involved in the acquisition of phosphate released by arbuscular mycorrhizal (AM) fungi (e.g. Gigaspora margarita and Funnelliformis mosseae) during AM symbiosis; required for propper mycorrhizal arbuscule morphology. Acts as a Pi-sensing machinery at the root tip level, independently of AM fungi, involved in the regulation of early root branching and lateral roots formation. The chain is Low affinity inorganic phosphate transporter 4 from Lotus japonicus (Lotus corniculatus var. japonicus).